The sequence spans 959 residues: E3 ubiquitin-protein ligase NEDD4-like (959 aa).

Positions 10-130 (PWHGVCVPVC…TEDPTMERPY (121 aa)) constitute a C2 domain. Disordered regions lie at residues 183–206 (SNDSASQHQEELPPPPLPPGWEEK), 248–275 (AAHRRFRSRRHISEDLEPEPSEGGDVPE), and 289–316 (DSLGLALPPPPASPGSRTSPQELSEELS). Positions 197–230 (PPLPPGWEEKVDNLGRTYYVNHNNRTTQWHRPSL) constitute a WW 1 domain. Phosphoserine is present on S316. T322 carries the phosphothreonine modification. S346 bears the Phosphoserine; by WNK1 and WNK4 mark. The region spanning 369-402 (PGLPSGWEERKDAKGRTYYVNHNNRTTTWTRPIM) is the WW 2 domain. The interval 408–478 (GASGSATNSN…YNSPKPQHKV (71 aa)) is disordered. S430 is modified (phosphoserine). The residue at position 432 (S432) is a Phosphoserine; by SGK1. The residue at position 433 (S433) is a Phosphoserine; by WNK1 and WNK4. Residues 444 to 455 (GAKDSPVRRAVK) show a composition bias toward basic and acidic residues. S448 carries the phosphoserine; by SGK1 modification. Phosphoserine occurs at positions 459, 463, 467, and 471. 2 WW domains span residues 481–514 (SFLPPGWEMRIAPNGRPFFIDHNTKTTTWEDPRL) and 532–565 (GPLPPGWEERIHLDGRTFYIDHNSKITQWEDPRL). Residues 624–958 (RPDVLKARLW…VENAQGFEGV (335 aa)) form the HECT domain. Catalysis depends on C926, which acts as the Glycyl thioester intermediate.

As to quaternary structure, interacts with UBE2E3. Interacts with NDFIP1; this interaction activates the E3 ubiquitin-protein ligase. Interacts with NDFIP2; this interaction activates the E3 ubiquitin-protein ligase. Interacts (via WW domains) with SCN1A. Interacts (via WW domains) with SCN2A. Interacts (via WW domains) with SCN3A. Interacts (via WW domains) with SCN5A. Interacts (via WW domains) with SCN8A. Interacts (via WW domains) with SCN9A. Interacts (via WW domains) with SCN10A. Interacts (via WW domains) with CLCN5. Interacts with SMAD2. Interacts with SMAD3. Interacts with SMAD6. Interacts with SMAD7. The phosphorylated form interacts with 14-3-3 proteins. Interacts with TNK2. Interacts with WNK1. Interacts with SGK1. Interacts (via C2 domain) with NPC2. Interacts with ARRDC4. Interacts with KCNQ1; promotes internalization of KCNQ1. Interacts (via domains WW1, 3 and 4) with USP36; the interaction inhibits ubiquitination of, at least, NTRK1, KCNQ2 and KCNQ3 by NEDD4L. Interacts with PRRG4 (via cytoplasmic domain). Interacts with LDLRAD3; the interaction is direct. Interacts with TTYH2 and TTYH3. Post-translationally, phosphorylated; which impairs interaction with SCNN. Interaction with YWHAH inhibits dephosphorylation. In terms of processing, auto-ubiquitinated.

It is found in the cytoplasm. Its subcellular location is the golgi apparatus. The protein resides in the endosome. The protein localises to the multivesicular body. The catalysed reaction is S-ubiquitinyl-[E2 ubiquitin-conjugating enzyme]-L-cysteine + [acceptor protein]-L-lysine = [E2 ubiquitin-conjugating enzyme]-L-cysteine + N(6)-ubiquitinyl-[acceptor protein]-L-lysine.. It participates in protein modification; protein ubiquitination. Its activity is regulated as follows. Activated by NDFIP1- and NDFIP2-binding. E3 ubiquitin-protein ligase which accepts ubiquitin from an E2 ubiquitin-conjugating enzyme in the form of a thioester and then directly transfers the ubiquitin to targeted substrates. Inhibits TGF-beta signaling by triggering SMAD2 and TGFBR1 ubiquitination and proteasome-dependent degradation. Promotes ubiquitination and internalization of various plasma membrane channels such as ENaC, Nav1.2, Nav1.3, Nav1.5, Nav1.7, Nav1.8, Kv1.3, KCNH2, EAAT1 or CLC5. Promotes ubiquitination and degradation of SGK1 and TNK2. Ubiquitinates BRAT1 and this ubiquitination is enhanced in the presence of NDFIP1. Plays a role in dendrite formation by melanocytes. Involved in the regulation of TOR signaling. Ubiquitinates TTYH2 and TTYH3 and regulates protein levels of TTYH2. The sequence is that of E3 ubiquitin-protein ligase NEDD4-like (NEDD4L) from Pongo abelii (Sumatran orangutan).